A 251-amino-acid chain; its full sequence is Protein FAM216A (251 aa).

Residues 1-16 are compositionally biased toward polar residues; that stretch reads MPNQGPVSDWTECSSS. The tract at residues 1 to 49 is disordered; it reads MPNQGPVSDWTECSSSAEPPAVARAEGGGGGSAGHSYYQNSKDRIKDGH.

It belongs to the FAM216 family.

The protein is Protein FAM216A (FAM216A) of Bos taurus (Bovine).